The sequence spans 950 residues: Protocadherin alpha-3 (950 aa).

The N-terminal stretch at 1–29 is a signal peptide; sequence MLFSWREDPGAQCLLLSLLLLAASEVGSG. 6 Cadherin domains span residues 30–133, 134–242, 243–350, 351–455, 456–565, and 581–678; these read QLHY…APVF, PMAV…APAF, ERTI…VPEL, VIQS…APAF, SQSE…APAL, and VPRS…APKA. Topologically, residues 30 to 697 are extracellular; sequence QLHYSVSEEA…GPEAALVDVN (668 aa). 2 N-linked (GlcNAc...) asparagine glycosylation sites follow: N257 and N265. N548 is a glycosylation site (N-linked (GlcNAc...) asparagine). The chain crosses the membrane as a helical span at residues 698–718; the sequence is VYLIVAICAVSSLLVLTLLLY. Topologically, residues 719 to 950 are cytoplasmic; sequence TALRCSAPPT…GNSTTDNSDQ (232 aa). PXXP repeat units lie at residues 734 to 737 and 774 to 777; these read PGKP and PSLP. The tract at residues 734-894 is 6 X 4 AA repeats of P-X-X-P; the sequence is PGKPTLVCSS…PDKFIIPGSP (161 aa). Disordered stretches follow at residues 777-806, 831-856, and 869-950; these read PPCPISRDREEKQDVDVDLSAKPRQPNPDW, GPGGPDQQWPTVSSATPEPEAGEVSP, and FKYG…NSDQ. The segment covering 782–797 has biased composition (basic and acidic residues); it reads SRDREEKQDVDVDLSA. PXXP repeat units follow at residues 799–802, 832–835, 873–876, and 891–894; these read PRQP, PGGP, PGNP, and PGSP. A compositionally biased stretch (basic and acidic residues) spans 909-923; it reads DKSDFITFGKKEETK.

It localises to the cell membrane. In terms of biological role, potential calcium-dependent cell-adhesion protein. May be involved in the establishment and maintenance of specific neuronal connections in the brain. This is Protocadherin alpha-3 (PCDHA3) from Homo sapiens (Human).